A 428-amino-acid chain; its full sequence is Putative POM121-like protein 1 (428 aa).

Disordered stretches follow at residues 1–23 (MDSLWGPGAGSHPFGVHNSRLSP), 36–204 (KESG…KFPL), 254–293 (DCRPSRPSHTLSSLATGASGLPAVSKAPSMDAQQERHKSQ), 306–384 (TEVP…PSTL), and 402–428 (GPQPQLQQVPRGQNQRSQTSRTSSCPK). The span at 44–62 (EQDKDPRVQENPGDQRRVP) shows a compositional bias: basic and acidic residues. The span at 106 to 117 (QTSQTSWTSSCT) shows a compositional bias: low complexity. Polar residues-rich tracts occupy residues 118-129 (NRNAISSSYSST), 144-155 (SHCQLTLSSSKT), 260-269 (PSHTLSSLAT), 326-347 (FSSSDPLPATSSHSQDSAQVTS), and 403-415 (PQPQLQQVPRGQN). The segment covering 416-428 (QRSQTSRTSSCPK) has biased composition (low complexity).

It belongs to the POM121 family.

This chain is Putative POM121-like protein 1 (POM121L1P), found in Homo sapiens (Human).